A 502-amino-acid polypeptide reads, in one-letter code: Glycogen synthase (502 aa).

ADP-alpha-D-glucose is bound at residue K24.

Belongs to the glycosyltransferase 1 family. Bacterial/plant glycogen synthase subfamily.

It carries out the reaction [(1-&gt;4)-alpha-D-glucosyl](n) + ADP-alpha-D-glucose = [(1-&gt;4)-alpha-D-glucosyl](n+1) + ADP + H(+). Its pathway is glycan biosynthesis; glycogen biosynthesis. Synthesizes alpha-1,4-glucan chains using ADP-glucose. The chain is Glycogen synthase from Nitrosomonas eutropha (strain DSM 101675 / C91 / Nm57).